The sequence spans 71 residues: Protein SlyX homolog (71 aa).

Residues 52–71 form a disordered region; the sequence is RLDQAESSAGAPANERPPHY.

This sequence belongs to the SlyX family.

The polypeptide is Protein SlyX homolog (Rhodopseudomonas palustris (strain ATCC BAA-98 / CGA009)).